The following is a 221-amino-acid chain: Octanoyltransferase (221 aa).

A BPL/LPL catalytic domain is found at 38–220; that stretch reads GEIPDTLLLL…GFREVLGDPG (183 aa). Substrate-binding positions include 84–91, 149–151, and 163–165; these read RGGDATFH, AIG, and GFA. Catalysis depends on cysteine 181, which acts as the Acyl-thioester intermediate.

The protein belongs to the LipB family.

The protein resides in the cytoplasm. It catalyses the reaction octanoyl-[ACP] + L-lysyl-[protein] = N(6)-octanoyl-L-lysyl-[protein] + holo-[ACP] + H(+). It functions in the pathway protein modification; protein lipoylation via endogenous pathway; protein N(6)-(lipoyl)lysine from octanoyl-[acyl-carrier-protein]: step 1/2. Catalyzes the transfer of endogenously produced octanoic acid from octanoyl-acyl-carrier-protein onto the lipoyl domains of lipoate-dependent enzymes. Lipoyl-ACP can also act as a substrate although octanoyl-ACP is likely to be the physiological substrate. The sequence is that of Octanoyltransferase from Rubrobacter xylanophilus (strain DSM 9941 / JCM 11954 / NBRC 16129 / PRD-1).